The chain runs to 150 residues: Putative ribosome maturation factor RimP (150 aa).

It belongs to the RimP family.

The protein localises to the cytoplasm. Its function is as follows. Required for maturation of 30S ribosomal subunits. This chain is Putative ribosome maturation factor RimP, found in Mycobacterium leprae (strain TN).